We begin with the raw amino-acid sequence, 1379 residues long: Vascular endothelial growth factor receptor 3 (1379 aa).

The N-terminal stretch at 1-19 is a signal peptide; sequence MKRVCTLPLWLWLGIVSEA. The Extracellular portion of the chain corresponds to 20 to 788; the sequence is DLVSSYSMTP…EGSDDKTNVE (769 aa). 7 consecutive Ig-like C2-type domains span residues 30-136, 160-222, 240-335, 340-421, 430-566, 569-684, and 691-777; these read PTLS…TAVS, KENT…IDNK, DIQL…TDVI, PFIN…KRIS, PRIH…FYVT, PDGF…KYIS, and PRLK…ASVS. 2 disulfides stabilise this stretch: cysteine 51/cysteine 120 and cysteine 167/cysteine 215. A disordered region spans residues 73–93; sequence RRWNSQPQQRPVGAGNPEEDC. 4 N-linked (GlcNAc...) asparagine glycosylation sites follow: asparagine 113, asparagine 175, asparagine 260, and asparagine 308. Cysteine 261 and cysteine 319 form a disulfide bridge. 3 disulfides stabilise this stretch: cysteine 453-cysteine 548, cysteine 474-cysteine 500, and cysteine 592-cysteine 666. 7 N-linked (GlcNAc...) asparagine glycosylation sites follow: asparagine 529, asparagine 541, asparagine 596, asparagine 608, asparagine 655, asparagine 696, and asparagine 703. A disulfide bridge connects residues cysteine 712 and cysteine 761. N-linked (GlcNAc...) asparagine glycosylation occurs at asparagine 771. A helical transmembrane segment spans residues 789–809; the sequence is IVILIGTGVIAVFFWILLIII. Over 810 to 1379 the chain is Cytoplasmic; it reads FCNIKRPAHA…LHASFFSEQY (570 aa). One can recognise a Protein kinase domain in the interval 858–1185; sequence LRLGKVLGHG…DLVEILGNLL (328 aa). ATP contacts are provided by residues 864-872 and lysine 892; that span reads LGHGAFGKV. The Proton acceptor role is filled by aspartate 1049. 2 positions are modified to phosphotyrosine; by autocatalysis: tyrosine 1075 and tyrosine 1080. The tract at residues 1196-1224 is disordered; that stretch reads YIPLNDSHSSEDDGFSQVPSSAQQNSDEE. Phosphotyrosine; by autocatalysis occurs at positions 1239, 1240, 1274, 1342, and 1346. The segment at 1299 to 1379 is disordered; it reads RHRKEGGFSS…LHASFFSEQY (81 aa). The segment covering 1332–1343 has biased composition (polar residues); sequence YGSQVGGQTFYN.

Belongs to the protein kinase superfamily. Tyr protein kinase family. CSF-1/PDGF receptor subfamily. As to quaternary structure, interacts with VEGFC and VEGFD. Monomer in the absence of bound VEGFC or VEGFD. Homodimer in the presence of bound VEGFC or VEGFD. Autophosphorylated on tyrosine residues upon ligand binding. Autophosphorylation occurs in trans, i.e. one subunit of the dimeric receptor phosphorylates tyrosine residues on the other subunit.

It localises to the cell membrane. The protein resides in the cytoplasm. It is found in the nucleus. The enzyme catalyses L-tyrosyl-[protein] + ATP = O-phospho-L-tyrosyl-[protein] + ADP + H(+). Present in an inactive conformation in the absence of bound ligand. Binding of VEGFC or VEGFD leads to dimerization and activation by autophosphorylation on tyrosine residues. Its function is as follows. Tyrosine-protein kinase that acts as a cell-surface receptor for VEGFC and VEGFD, and plays an essential role in lymphangiogenesis and in the development of the vascular network and the cardiovascular system during embryonic development. Promotes proliferation, survival and migration of endothelial cells, and regulates angiogenic sprouting. Mediates activation of the MAPK1/ERK2, MAPK3/ERK1 signaling pathway, of MAPK8 and the JUN signaling pathway, and of the AKT1 signaling pathway. This Coturnix coturnix (Common quail) protein is Vascular endothelial growth factor receptor 3 (FLT4).